The primary structure comprises 555 residues: L-ascorbate oxidase homolog (555 aa).

The signal sequence occupies residues 1–23 (MRGVKLLAACLYLAAAATVVVHA). Plastocyanin-like domains lie at 25–145 (DPYF…LRVN) and 158–301 (EDDY…RYEG). 3 N-linked (GlcNAc...) asparagine glycosylation sites follow: Asn-33, Asn-61, and Asn-110. Cys-103 and Cys-539 are disulfide-bonded. N-linked (GlcNAc...) asparagine glycans are attached at residues Asn-330, Asn-350, and Asn-422. The Plastocyanin-like 3 domain occupies 345–524 (HYGKINITRT…LYASVLSPEK (180 aa)).

This sequence belongs to the multicopper oxidase family. As to expression, maximal expression in early binucleate microspores; declines considerably in mature trinucleate pollen.

It localises to the secreted. Probable oxidase that may be involved in pollen tube growth. This Brassica napus (Rape) protein is L-ascorbate oxidase homolog (Bp10).